Here is a 757-residue protein sequence, read N- to C-terminus: Cellulose synthase-like protein B2 (757 aa).

2 helical membrane passes run 24-44 and 48-68; these read AVDLTILGLLFSLLLHRILYM and GIIWLVAFLCESCFSFVWLLS. Active-site residues include aspartate 136 and aspartate 461. The next 6 membrane-spanning stretches (helical) occupy residues 533–555, 568–588, 607–627, 672–692, 704–724, and 735–755; these read AYLCVSICVRSIPELIYCLLPAY, LCLGITMLLAGMHCLYTLWEF, IVATSSWLFSIFDIILKLLGL, FLPGTFIVLVNLAALVGVFVG, GSGLGEACACILVVMLFFPFL, and IPLSTLSKAGFLAVSFVVFSV.

The protein belongs to the glycosyltransferase 2 family. Plant cellulose synthase-like B subfamily. As to expression, expressed in young seedlings, primarily in the root vascular tissue.

Its subcellular location is the golgi apparatus membrane. In terms of biological role, thought to be a Golgi-localized beta-glycan synthase that polymerize the backbones of noncellulosic polysaccharides (hemicelluloses) of plant cell wall. The protein is Cellulose synthase-like protein B2 (CSLB2) of Arabidopsis thaliana (Mouse-ear cress).